Consider the following 2012-residue polypeptide: Cell adhesion molecule DSCAM (2012 aa).

An N-terminal signal peptide occupies residues Met1–Ser17. At Glu18–Met1595 the chain is on the extracellular side. Asn28 and Asn78 each carry an N-linked (GlcNAc...) asparagine glycan. Ig-like C2-type domains lie at Thr39–Arg129, Pro125–Phe216, Pro225–Ile305, Pro313–Val401, Pro407–Asn500, Pro504–Thr592, Pro596–Ile685, Pro690–Thr783, and Pro787–Gln883. Disulfide bonds link Cys46-Cys102, Cys145-Cys197, Cys246-Cys293, Cys335-Cys385, and Cys428-Cys484. N-linked (GlcNAc...) asparagine glycosylation is found at Asn470, Asn487, Asn512, Asn556, Asn658, Asn666, Asn710, Asn748, and Asn795. 2 disulfide bridges follow: Cys525-Cys575 and Cys617-Cys669. Cys711 and Cys766 are joined by a disulfide. The cysteines at positions 809 and 865 are disulfide-linked. 4 consecutive Fibronectin type-III domains span residues Pro885–Ala982, Pro987–Asp1086, Pro1091–Asp1187, and Pro1191–Pro1285. N-linked (GlcNAc...) asparagine glycosylation is present at Asn924. Residues Asn1142, Asn1160, Asn1250, Asn1271, and Asn1341 are each glycosylated (N-linked (GlcNAc...) asparagine). Positions Pro1285–Gln1377 constitute an Ig-like C2-type 10 domain. Cys1307 and Cys1359 are oxidised to a cystine. Fibronectin type-III domains follow at residues Pro1379–Lys1473 and Glu1474–Pro1575. Asn1488 is a glycosylation site (N-linked (GlcNAc...) asparagine). The helical transmembrane segment at Leu1596 to Val1616 threads the bilayer. Topologically, residues Arg1617–Val2012 are cytoplasmic. Positions Arg1617 to Val2012 are required for netrin-mediated axon repulsion of neuronal growth cones. 3 disordered regions span residues Leu1718–Thr1810, Thr1855–Arg1883, and Leu1971–Val2012. The segment covering Ser1799–Ser1809 has biased composition (low complexity). Over residues Thr1855 to Glu1865 the composition is skewed to polar residues.

Homodimer; mediates homophilic interactions to promote cell adhesion. Interacts with DCC; the interaction is abolished in response to NTN1. Interacts (via extracellular domain) with NTN1. Interacts (via extracellular domain) with UNC5C (via Ig-like C2-type domain). Interacts with PTK2. Interacts with FYN. Phosphorylated at tyrosine residues. Phosphorylation is enhanced by NTN1. Primarily expressed in brain.

It is found in the secreted. The protein localises to the cell membrane. It localises to the cell projection. Its subcellular location is the axon. The protein resides in the dendrite. It is found in the growth cone. The protein localises to the synapse. Functionally, cell adhesion molecule that plays a role in neuronal self-avoidance. Promotes repulsion between specific neuronal processes of either the same cell or the same subtype of cells. Mediates within retinal amacrine and ganglion cell subtypes both isoneuronal self-avoidance for creating an orderly dendritic arborization and heteroneuronal self-avoidance to maintain the mosaic spacing between amacrine and ganglion cell bodies. Receptor for netrin required for axon guidance independently of and in collaboration with the receptor DCC. Might also collaborate with UNC5C in NTN1-mediated axon repulsion independently of DCC. In spinal cord development plays a role in guiding commissural axons projection and pathfinding across the ventral midline to reach the floor plate upon ligand binding. Mediates intracellular signaling by stimulating the activation of MAPK8 and MAP kinase p38. Adhesion molecule that promotes lamina-specific synaptic connections in the retina: expressed in specific subsets of interneurons and retinal ganglion cells (RGCs) and promotes synaptic connectivity via homophilic interactions. In Homo sapiens (Human), this protein is Cell adhesion molecule DSCAM (DSCAM).